The chain runs to 335 residues: MSGTELDEPGKLKRAVIDASAGGVAGAISRMVTSPLDVIKIRFQVQLEPTATWALKDSQLKPKYNGLFRTTKDIFREEGLSGFWRGNVPALLMVVPYTSIQFAVLHKVKSFAAGSSKAENHAQLSPYLSYISGALAGCAATVGSYPFDLLRTVLASQGEPKVYPNMRSAFLSIVQTRGIKGLYAGLSPTLIEIIPYAGLQFGTYDTFKRWSMVYNKRYRSSSSSSTNPSDSLSSFQLFLCGLASGTVSKLVCHPLDVVKKRFQVEGLQRHPKYGARVELNAYKNMFDGLGQILRSEGWHGLYKGIVPSTIKAAPAGAVTFVAYELASDWFEANLT.

The next 6 helical transmembrane spans lie at 13–29 (KRAV…GAIS), 88–105 (VPAL…FAVL), 127–150 (YLSY…FDLL), 182–199 (LYAG…YAGL), 231–247 (SLSS…SGTV), and 304–323 (GIVP…FVAY). 3 Solcar repeats span residues 13-111 (KRAV…VKSF), 124-210 (LSPY…FKRW), and 232-329 (LSSF…ASDW).

It belongs to the mitochondrial carrier (TC 2.A.29) family.

Its subcellular location is the mitochondrion inner membrane. In terms of biological role, mitochondrial transporter that mediates uptake of thiamine diphosphate (ThDP) into mitochondria. The sequence is that of Mitochondrial thiamine diphosphate carrier 1 from Arabidopsis thaliana (Mouse-ear cress).